The chain runs to 469 residues: MNPNQKIITIGSVSLTIATICFLMQIAILVTTVTLHFKQYECSSPPNNQVMPCEPIIIERNITEIVYLTNTTIEKEICPKLVEYRNWSKPQCKITGFAPFSKDNSIRLSAGGDIWVTREPYVSCDPGKCYQFALGQGTTLNNKHSNDTIHDRTPYRTLLMNELGVPFHLGTKQVCIAWSSSSCHDGKAWLHVCVTGHDKNATASFIYDGRLVDSIGSWSKNILRTQESECVCINGTCTVVMTDGSASERADTKILFIEEGKIVHISPLSGSAQHVEECSCYPRYPGVRCVCRDNWKGSNRPIVDINVKDYSIVSSYVCSGLVGDTPRKNDRSSSSYCRNPNNEKGNHGVKGWAFDDGNDVWMGRTIGEELRSGYETFKVIGGWSTPNSKLQINRQVIVDSDNRSGYSGIFSVEGKSCINRCFYVELIRGREQETRVWWTSNSIVVFCGTSGTYGTGSWPDGADINLMPI.

Over 1-9 (MNPNQKIIT) the chain is Intravirion. A helical membrane pass occupies residues 10–30 (IGSVSLTIATICFLMQIAILV). The tract at residues 11 to 33 (GSVSLTIATICFLMQIAILVTTV) is involved in apical transport and lipid raft association. At 31 to 469 (TTVTLHFKQY…DGADINLMPI (439 aa)) the chain is on the virion surface side. Residues 36 to 88 (HFKQYECSSPPNNQVMPCEPIIIERNITEIVYLTNTTIEKEICPKLVEYRNWS) form a hypervariable stalk region region. N-linked (GlcNAc...) asparagine; by host glycans are attached at residues Asn-61, Asn-70, and Asn-86. Residues 91 to 469 (QCKITGFAPF…DGADINLMPI (379 aa)) form a head of neuraminidase region. Cystine bridges form between Cys-92–Cys-417, Cys-124–Cys-129, Cys-183–Cys-230, Cys-232–Cys-237, Cys-278–Cys-291, Cys-280–Cys-289, Cys-318–Cys-337, and Cys-421–Cys-447. Position 118 (Arg-118) interacts with substrate. Asn-146 is a glycosylation site (N-linked (GlcNAc...) asparagine; by host). Asp-151 serves as the catalytic Proton donor/acceptor. Substrate is bound at residue Arg-152. Asn-200 and Asn-234 each carry an N-linked (GlcNAc...) asparagine; by host glycan. Residue 276–277 (EE) participates in substrate binding. Arg-292 contributes to the substrate binding site. Ca(2+) is bound by residues Asp-293, Gly-297, and Asp-324. Residue Arg-371 participates in substrate binding. Asn-402 carries N-linked (GlcNAc...) asparagine; by host glycosylation. Tyr-406 (nucleophile) is an active-site residue.

The protein belongs to the glycosyl hydrolase 34 family. Homotetramer. The cofactor is Ca(2+). Post-translationally, N-glycosylated.

It is found in the virion membrane. Its subcellular location is the host apical cell membrane. The catalysed reaction is Hydrolysis of alpha-(2-&gt;3)-, alpha-(2-&gt;6)-, alpha-(2-&gt;8)- glycosidic linkages of terminal sialic acid residues in oligosaccharides, glycoproteins, glycolipids, colominic acid and synthetic substrates.. With respect to regulation, inhibited by the neuraminidase inhibitors zanamivir (Relenza) and oseltamivir (Tamiflu). These drugs interfere with the release of progeny virus from infected cells and are effective against all influenza strains. Resistance to neuraminidase inhibitors is quite rare. Catalyzes the removal of terminal sialic acid residues from viral and cellular glycoconjugates. Cleaves off the terminal sialic acids on the glycosylated HA during virus budding to facilitate virus release. Additionally helps virus spread through the circulation by further removing sialic acids from the cell surface. These cleavages prevent self-aggregation and ensure the efficient spread of the progeny virus from cell to cell. Otherwise, infection would be limited to one round of replication. Described as a receptor-destroying enzyme because it cleaves a terminal sialic acid from the cellular receptors. May facilitate viral invasion of the upper airways by cleaving the sialic acid moieties on the mucin of the airway epithelial cells. Likely to plays a role in the budding process through its association with lipid rafts during intracellular transport. May additionally display a raft-association independent effect on budding. Plays a role in the determination of host range restriction on replication and virulence. Sialidase activity in late endosome/lysosome traffic seems to enhance virus replication. This Influenza A virus (strain A/Hong Kong/5/1983 H3N2) protein is Neuraminidase.